Here is a 233-residue protein sequence, read N- to C-terminus: 2-amino-5-formylamino-6-ribosylaminopyrimidin-4(3H)-one 5'-monophosphate deformylase (233 aa).

Residues Glu-33, His-35, Asp-44, and His-114 each contribute to the Fe cation site.

It belongs to the creatininase superfamily. FAPy deformylase family. In terms of assembly, homodimer. Fe(2+) serves as cofactor. The cofactor is Zn(2+).

The catalysed reaction is 2-amino-5-formylamino-6-(5-phospho-D-ribosylamino)pyrimidin-4(3H)-one + H2O = 2,5-diamino-6-(1-D-ribosylamino)pyrimidin-4(3H)-one 5'-phosphate + formate + H(+). It functions in the pathway cofactor biosynthesis; coenzyme F420 biosynthesis. The protein operates within cofactor biosynthesis; riboflavin biosynthesis. Functionally, catalyzes the hydrolysis of the formamide of 2-amino-5-formylamino-6-ribosylamino-4(3H)-pyrimidinone 5'-monophosphate (FAPy) to form 2,5-diamino-6-ribosylamino-4(3H)-pyrimidinone 5'-phosphate (APy). The chain is 2-amino-5-formylamino-6-ribosylaminopyrimidin-4(3H)-one 5'-monophosphate deformylase from Methanosphaera stadtmanae (strain ATCC 43021 / DSM 3091 / JCM 11832 / MCB-3).